The following is a 901-amino-acid chain: Protein translocase subunit SecA (901 aa).

ATP is bound by residues glutamine 85, 103–107, and aspartate 492; that span reads GEGKT. The segment at 828–901 is disordered; sequence GLVTDDGGNP…PKNRRNKKRR (74 aa). The segment covering 871–881 has biased composition (basic and acidic residues); that stretch reads DGQKPRGEGNR. Over residues 882–901 the composition is skewed to basic residues; sequence AARRSAASKKPKNRRNKKRR.

The protein belongs to the SecA family. As to quaternary structure, monomer and homodimer. Part of the essential Sec protein translocation apparatus which comprises SecA, SecYEG and auxiliary proteins SecDF. Other proteins may also be involved.

Its subcellular location is the cell membrane. It localises to the cytoplasm. The catalysed reaction is ATP + H2O + cellular proteinSide 1 = ADP + phosphate + cellular proteinSide 2.. Functionally, part of the Sec protein translocase complex. Interacts with the SecYEG preprotein conducting channel. Has a central role in coupling the hydrolysis of ATP to the transfer of proteins into and across the cell membrane, serving as an ATP-driven molecular motor driving the stepwise translocation of polypeptide chains across the membrane. The protein is Protein translocase subunit SecA of Cutibacterium acnes (strain DSM 16379 / KPA171202) (Propionibacterium acnes).